The chain runs to 185 residues: Potassium-transporting ATPase KdpC subunit (185 aa).

The chain crosses the membrane as a helical span at residues 8-28 (LGLVLIMFVLCGFIFPLTVTA). The interval 113-132 (GQKLSSDAVTTSGSGLDPDI) is disordered. Residues 114 to 126 (QKLSSDAVTTSGS) show a composition bias toward polar residues.

It belongs to the KdpC family. In terms of assembly, the system is composed of three essential subunits: KdpA, KdpB and KdpC.

It is found in the cell membrane. Its function is as follows. Part of the high-affinity ATP-driven potassium transport (or Kdp) system, which catalyzes the hydrolysis of ATP coupled with the electrogenic transport of potassium into the cytoplasm. This subunit acts as a catalytic chaperone that increases the ATP-binding affinity of the ATP-hydrolyzing subunit KdpB by the formation of a transient KdpB/KdpC/ATP ternary complex. This chain is Potassium-transporting ATPase KdpC subunit, found in Staphylococcus haemolyticus (strain JCSC1435).